The sequence spans 2543 residues: Polyketide synthase PksR (2543 aa).

The methyltransferase stretch occupies residues 165 to 269; it reads LEIGAGTGGT…KAVLKKNGLL (105 aa). The region spanning 376 to 452 is the Carrier 1 domain; sequence SLIEQTAQFV…ELVEYLVKGH (77 aa). At Ser413 the chain carries O-(pantetheine 4'-phosphoryl)serine. Residues 465 to 485 form a disordered region; it reads TKPAKNEAPLQTERTDPNKPF. Positions 527–959 constitute a Ketosynthase family 3 (KS3) 1 domain; it reads TEDIAIIGVS…GAYANLIIEE (433 aa). Catalysis depends on Cys700, which acts as the For beta-ketoacyl synthase 1 activity. The tract at residues 1114-1242 is N-terminal hotdog fold; that stretch reads HFDVSSINEK…GQCGIGSFEP (129 aa). Residues 1114-1397 enclose the PKS/mFAS DH domain; the sequence is HFDVSSINEK…LKQLRISNQR (284 aa). Residues 1255-1397 are C-terminal hotdog fold; sequence TKLHHIDQMY…LKQLRISNQR (143 aa). Positions 1407-1485 constitute a Carrier 2 domain; the sequence is SNLKARIRSY…ELIDFFADKH (79 aa). Ser1445 is modified (O-(pantetheine 4'-phosphoryl)serine). Positions 1528–1946 constitute a Ketosynthase family 3 (KS3) 2 domain; sequence ADGIAIIGMS…GVNAHVILEE (419 aa). Catalysis depends on for beta-ketoacyl synthase 2 activity residues Cys1680, His1815, and His1862. One can recognise a Carrier 3 domain in the interval 2134–2208; sequence RINNSSDHHI…DMMDLIAKKQ (75 aa). Ser2168 is subject to O-(pantetheine 4'-phosphoryl)serine. Positions 2234-2514 are thioesterase; that stretch reads RPVFWFHGGV…EFCEKLYSNR (281 aa).

Pantetheine 4'-phosphate serves as cofactor.

Its subcellular location is the cytoplasm. It functions in the pathway antibiotic biosynthesis; bacillaene biosynthesis. In terms of biological role, involved in some intermediate steps for the synthesis of the antibiotic polyketide bacillaene which is involved in secondary metabolism. The chain is Polyketide synthase PksR (pksR) from Bacillus subtilis (strain 168).